The primary structure comprises 193 residues: Xanthine phosphoribosyltransferase (193 aa).

Xanthine-binding residues include L20 and N27. A 5-phospho-alpha-D-ribose 1-diphosphate-binding site is contributed by 128-132; it reads ANGEA. Position 156 (K156) interacts with xanthine.

The protein belongs to the purine/pyrimidine phosphoribosyltransferase family. Xpt subfamily. In terms of assembly, homodimer.

It localises to the cytoplasm. The enzyme catalyses XMP + diphosphate = xanthine + 5-phospho-alpha-D-ribose 1-diphosphate. The protein operates within purine metabolism; XMP biosynthesis via salvage pathway; XMP from xanthine: step 1/1. Functionally, converts the preformed base xanthine, a product of nucleic acid breakdown, to xanthosine 5'-monophosphate (XMP), so it can be reused for RNA or DNA synthesis. The chain is Xanthine phosphoribosyltransferase from Exiguobacterium sp. (strain ATCC BAA-1283 / AT1b).